The primary structure comprises 252 residues: NAC domain-containing protein 23 (252 aa).

The NAC domain occupies 12-177 (MPPGFRFQPT…EMVLCRISNK (166 aa)). Residues 110 to 183 (TAVKRRFVFY…ISNKDLPKPP (74 aa)) mediate DNA binding. The interval 225–252 (VDDAAAADDDPGDLDEEIDDSMQRNHGG) is disordered. Residues 229-244 (AAADDDPGDLDEEIDD) are compositionally biased toward acidic residues.

Forms heterodimers with NAC26. In terms of tissue distribution, expressed in stems and panicles. Expressed in developing seeds.

It is found in the nucleus. The protein resides in the cytoplasm. Transcription factor involved in the regulation of seed size. Possesses transactivation activity in yeast. This chain is NAC domain-containing protein 23, found in Oryza sativa subsp. indica (Rice).